The following is a 168-amino-acid chain: Replicase polyprotein 1ab (168 aa).

Positions 1–165 (PNTKSIDGEN…KLLNFGNHLV (165 aa)) constitute a Nidovirus-type SAM-dependent 2'-O-MTase domain.

Functionally, the replicase polyprotein of coronaviruses is a multifunctional protein: it contains the activities necessary for the transcription of negative stranded RNA, leader RNA, subgenomic mRNAs and progeny virion RNA as well as proteinases responsible for the cleavage of the polyprotein into functional products. The chain is Replicase polyprotein 1ab (rep) from Canine coronavirus (strain Insavc-1) (CCoV).